The primary structure comprises 242 residues: Ribosomal RNA small subunit methyltransferase G (242 aa).

S-adenosyl-L-methionine contacts are provided by residues G82, F87, 133 to 134, and R152; that span reads AE.

It belongs to the methyltransferase superfamily. RNA methyltransferase RsmG family.

The protein resides in the cytoplasm. In terms of biological role, specifically methylates the N7 position of a guanine in 16S rRNA. The sequence is that of Ribosomal RNA small subunit methyltransferase G from Acetivibrio thermocellus (strain ATCC 27405 / DSM 1237 / JCM 9322 / NBRC 103400 / NCIMB 10682 / NRRL B-4536 / VPI 7372) (Clostridium thermocellum).